A 428-amino-acid polypeptide reads, in one-letter code: Aspartic protease 10 (428 aa).

A signal peptide spans 1–16 (MKTFIALLALLTVVSA). The region spanning 72–425 (YMVQISLGSP…DMKSGRLGLA (354 aa)) is the Peptidase A1 domain. The active site involves Asp90. N-linked (GlcNAc...) asparagine glycans are attached at residues Asn155 and Asn191. Asp318 is a catalytic residue. Cysteines 353 and 385 form a disulfide.

This sequence belongs to the peptidase A1 family. In terms of processing, proteolytically cleaved. As to expression, synthesized in the intestine. When secreted in low heme conditions, localizes to neurons near the anterior and posterior regions of the body and in coelomocytes.

Its subcellular location is the secreted. In terms of biological role, aspartic protease which plays a role in heme homeostasis and mediates inter-organ signaling between the intestine and extra-intestinal tissues when cellular heme levels are low. The sequence is that of Aspartic protease 10 from Caenorhabditis elegans.